We begin with the raw amino-acid sequence, 483 residues long: Glycogen synthase (483 aa).

Lys-15 is a binding site for ADP-alpha-D-glucose.

Belongs to the glycosyltransferase 1 family. Bacterial/plant glycogen synthase subfamily.

It carries out the reaction [(1-&gt;4)-alpha-D-glucosyl](n) + ADP-alpha-D-glucose = [(1-&gt;4)-alpha-D-glucosyl](n+1) + ADP + H(+). Its pathway is glycan biosynthesis; glycogen biosynthesis. In terms of biological role, synthesizes alpha-1,4-glucan chains using ADP-glucose. This is Glycogen synthase from Thioalkalivibrio sulfidiphilus (strain HL-EbGR7).